We begin with the raw amino-acid sequence, 616 residues long: Sulfite reductase [NADPH] hemoprotein beta-component (616 aa).

Positions 1-10 (MDDHSPRDAA) are enriched in basic and acidic residues. Residues 1–35 (MDDHSPRDAAETPAPGPAATPAKRVYETPPTSRPI) are disordered. The segment covering 11 to 22 (ETPAPGPAATPA) has biased composition (low complexity). Residues C470, C476, C515, and C519 each contribute to the [4Fe-4S] cluster site. Residue C519 participates in siroheme binding.

The protein belongs to the nitrite and sulfite reductase 4Fe-4S domain family. In terms of assembly, alpha(8)-beta(8). The alpha component is a flavoprotein, the beta component is a hemoprotein. It depends on siroheme as a cofactor. [4Fe-4S] cluster is required as a cofactor.

The catalysed reaction is hydrogen sulfide + 3 NADP(+) + 3 H2O = sulfite + 3 NADPH + 4 H(+). The protein operates within sulfur metabolism; hydrogen sulfide biosynthesis; hydrogen sulfide from sulfite (NADPH route): step 1/1. Its function is as follows. Component of the sulfite reductase complex that catalyzes the 6-electron reduction of sulfite to sulfide. This is one of several activities required for the biosynthesis of L-cysteine from sulfate. This Methylobacterium radiotolerans (strain ATCC 27329 / DSM 1819 / JCM 2831 / NBRC 15690 / NCIMB 10815 / 0-1) protein is Sulfite reductase [NADPH] hemoprotein beta-component.